The sequence spans 618 residues: Proline--tRNA ligase (618 aa).

It belongs to the class-II aminoacyl-tRNA synthetase family. ProS type 1 subfamily. In terms of assembly, homodimer.

It is found in the cytoplasm. The catalysed reaction is tRNA(Pro) + L-proline + ATP = L-prolyl-tRNA(Pro) + AMP + diphosphate. In terms of biological role, catalyzes the attachment of proline to tRNA(Pro) in a two-step reaction: proline is first activated by ATP to form Pro-AMP and then transferred to the acceptor end of tRNA(Pro). As ProRS can inadvertently accommodate and process non-cognate amino acids such as alanine and cysteine, to avoid such errors it has two additional distinct editing activities against alanine. One activity is designated as 'pretransfer' editing and involves the tRNA(Pro)-independent hydrolysis of activated Ala-AMP. The other activity is designated 'posttransfer' editing and involves deacylation of mischarged Ala-tRNA(Pro). The misacylated Cys-tRNA(Pro) is not edited by ProRS. The protein is Proline--tRNA ligase of Streptococcus pyogenes serotype M4 (strain MGAS10750).